The primary structure comprises 176 residues: ATP-dependent protease subunit HslV (176 aa).

T6 is a catalytic residue. Positions 161, 164, and 167 each coordinate Na(+).

Belongs to the peptidase T1B family. HslV subfamily. In terms of assembly, a double ring-shaped homohexamer of HslV is capped on each side by a ring-shaped HslU homohexamer. The assembly of the HslU/HslV complex is dependent on binding of ATP.

The protein resides in the cytoplasm. It carries out the reaction ATP-dependent cleavage of peptide bonds with broad specificity.. Its activity is regulated as follows. Allosterically activated by HslU binding. Its function is as follows. Protease subunit of a proteasome-like degradation complex believed to be a general protein degrading machinery. The protein is ATP-dependent protease subunit HslV of Aquifex aeolicus (strain VF5).